We begin with the raw amino-acid sequence, 147 residues long: Probable WRKY transcription factor 45 (147 aa).

The disordered stretch occupies residues 21 to 52 (TEFHGVDNSAQPTTSSEEKPRSKKKKKEREAR). Positions 59 to 124 (SQVDILDDGY…YQGVHTHAVD (66 aa)) form a DNA-binding region, WRKY. Zn(2+)-binding residues include Cys90, Cys95, His119, and His121.

This sequence belongs to the WRKY group I family.

The protein resides in the nucleus. Functionally, transcription factor. Interacts specifically with the W box (5'-(T)TGAC[CT]-3'), a frequently occurring elicitor-responsive cis-acting element. This Arabidopsis thaliana (Mouse-ear cress) protein is Probable WRKY transcription factor 45 (WRKY45).